We begin with the raw amino-acid sequence, 151 residues long: UPF0336 protein Franean1_6066 (151 aa).

In terms of domain architecture, MaoC-like spans Val-8–Phe-127.

Belongs to the UPF0336 family.

The protein is UPF0336 protein Franean1_6066 of Parafrankia sp. (strain EAN1pec).